A 306-amino-acid polypeptide reads, in one-letter code: Bifunctional protein FolD 2 (306 aa).

NADP(+) is bound by residues 169–171 and isoleucine 235; that span reads GHS.

The protein belongs to the tetrahydrofolate dehydrogenase/cyclohydrolase family. In terms of assembly, homodimer.

The catalysed reaction is (6R)-5,10-methylene-5,6,7,8-tetrahydrofolate + NADP(+) = (6R)-5,10-methenyltetrahydrofolate + NADPH. The enzyme catalyses (6R)-5,10-methenyltetrahydrofolate + H2O = (6R)-10-formyltetrahydrofolate + H(+). Its pathway is one-carbon metabolism; tetrahydrofolate interconversion. In terms of biological role, catalyzes the oxidation of 5,10-methylenetetrahydrofolate to 5,10-methenyltetrahydrofolate and then the hydrolysis of 5,10-methenyltetrahydrofolate to 10-formyltetrahydrofolate. The protein is Bifunctional protein FolD 2 of Mesorhizobium japonicum (strain LMG 29417 / CECT 9101 / MAFF 303099) (Mesorhizobium loti (strain MAFF 303099)).